The sequence spans 314 residues: Acetaldehyde dehydrogenase 2 (314 aa).

An NAD(+)-binding site is contributed by 15 to 18 (SGNI). Catalysis depends on cysteine 133, which acts as the Acyl-thioester intermediate. Residues 164-172 (SAGPGTRQN) and asparagine 289 contribute to the NAD(+) site.

It belongs to the acetaldehyde dehydrogenase family.

It catalyses the reaction acetaldehyde + NAD(+) + CoA = acetyl-CoA + NADH + H(+). The sequence is that of Acetaldehyde dehydrogenase 2 from Nocardioides sp. (strain ATCC BAA-499 / JS614).